We begin with the raw amino-acid sequence, 131 residues long: MTAANQNYGTGRRKSSSARVFIKPGNGNITINQRSLEVYFGRETARMIVRQPLELVELTDKLDLYITVKGGGISGQAGAIRHGITRALIEYDETLRPALRAAGFVTRDARRVERKKVGLHKARRRPQYSKR.

This sequence belongs to the universal ribosomal protein uS9 family.

This Glaesserella parasuis serovar 5 (strain SH0165) (Haemophilus parasuis) protein is Small ribosomal subunit protein uS9.